The sequence spans 87 residues: MAHKKAGGSSRNGRDSESKRLGVKRFGGQVVLAGNILVRQRGTQFHPGDNVGIGKDHTLFAKTDGTVKFEIKGAARRKVVRIEPLAA.

The interval 1–20 (MAHKKAGGSSRNGRDSESKR) is disordered.

The protein belongs to the bacterial ribosomal protein bL27 family.

This Thiobacillus denitrificans (strain ATCC 25259 / T1) protein is Large ribosomal subunit protein bL27.